A 328-amino-acid polypeptide reads, in one-letter code: Alpha-tubulin N-acetyltransferase 2 (328 aa).

One can recognise an N-acetyltransferase domain in the interval 5-185 (SQVALLPKLS…NNFVVFHRYF (181 aa)). Acetyl-CoA is bound by residues 119–132 (FFVDTSFQRKGFGK) and 155–164 (SVKFLAFLRK). Disordered stretches follow at residues 219 to 261 (EYQS…PGKK) and 282 to 328 (GGDP…TPEH). Positions 238 to 248 (TPPPPLPPPLV) are enriched in pro residues. Residues 312–328 (PTRSGVQYNIISGTPEH) are compositionally biased toward polar residues.

It belongs to the acetyltransferase ATAT1 family.

The catalysed reaction is L-lysyl-[alpha-tubulin] + acetyl-CoA = N(6)-acetyl-L-lysyl-[alpha-tubulin] + CoA + H(+). Specifically acetylates 'Lys-40' in alpha-tubulin on the lumenal side of microtubules. Promotes microtubule destabilization and accelerates microtubule dynamics; this activity may be independent of acetylation activity. Acetylates alpha-tubulin with a slow enzymatic rate, due to a catalytic site that is not optimized for acetyl transfer. Enters the microtubule through each end and diffuses quickly throughout the lumen of microtubules. Acetylates only long/old microtubules because of its slow acetylation rate since it does not have time to act on dynamically unstable microtubules before the enzyme is released. The sequence is that of Alpha-tubulin N-acetyltransferase 2 from Trypanosoma cruzi (strain CL Brener).